We begin with the raw amino-acid sequence, 434 residues long: Enolase (434 aa).

Substrate contacts are provided by histidine 158 and glutamate 167. Residue glutamate 210 is the Proton donor of the active site. Aspartate 245, glutamate 294, and aspartate 319 together coordinate Mg(2+). Residues glutamate 294 and aspartate 319 each coordinate substrate. The Proton acceptor role is filled by lysine 344. Substrate contacts are provided by residues 371-374 (SHRS) and lysine 395.

It belongs to the enolase family. Homodimer. Mg(2+) serves as cofactor.

It localises to the cytoplasm. It carries out the reaction (2R)-2-phosphoglycerate = phosphoenolpyruvate + H2O. The protein operates within carbohydrate degradation; glycolysis; pyruvate from D-glyceraldehyde 3-phosphate: step 4/5. The protein is Enolase (ENO) of Schistosoma mansoni (Blood fluke).